The primary structure comprises 148 residues: UPF0178 protein lpp0103 (148 aa).

This sequence belongs to the UPF0178 family.

The chain is UPF0178 protein lpp0103 from Legionella pneumophila (strain Paris).